The primary structure comprises 228 residues: Ribonuclease 3 (228 aa).

An RNase III domain is found at 8-130 (LKRLERRVDY…IIGAAFLDSD (123 aa)). Residue Glu43 participates in Mg(2+) binding. Asp47 is a catalytic residue. 2 residues coordinate Mg(2+): Asp116 and Glu119. Residue Glu119 is part of the active site. The region spanning 157-226 (DPKTRLQEHL…ANKMLDSLSG (70 aa)) is the DRBM domain.

Belongs to the ribonuclease III family. As to quaternary structure, homodimer. Mg(2+) is required as a cofactor.

The protein localises to the cytoplasm. It catalyses the reaction Endonucleolytic cleavage to 5'-phosphomonoester.. In terms of biological role, digests double-stranded RNA. Involved in the processing of primary rRNA transcript to yield the immediate precursors to the large and small rRNAs (23S and 16S). Processes some mRNAs, and tRNAs when they are encoded in the rRNA operon. Processes pre-crRNA and tracrRNA of type II CRISPR loci if present in the organism. This is Ribonuclease 3 from Psychromonas ingrahamii (strain DSM 17664 / CCUG 51855 / 37).